We begin with the raw amino-acid sequence, 406 residues long: Endo-xylogalacturonan hydrolase A (406 aa).

An N-terminal signal peptide occupies residues Met-1 to Ala-18. 5 PbH1 repeats span residues Ala-183–Glu-213, Ser-214–Ser-257, Val-266–Pro-289, Val-299–Ser-320, and Pro-333–Gly-375. The active-site Proton donor is the Asp-228. Residue His-251 is part of the active site. 2 N-linked (GlcNAc...) asparagine glycosylation sites follow: Asn-278 and Asn-301.

It belongs to the glycosyl hydrolase 28 family.

Its subcellular location is the secreted. Pectinolytic enzyme involved in the degradation of xylogalacturonan (xga), a galacturonan backbone heavily substituted with xylose, and which is one important component of the hairy regions of pectin. Activity requires a galacturonic acid backbone substituted with xylose. This chain is Endo-xylogalacturonan hydrolase A (xghA), found in Aspergillus tubingensis.